We begin with the raw amino-acid sequence, 321 residues long: MNPLTLVRETTAWVSGLSKHVKINNEALDKECEDFLNKHKIKAHKEIWADNWFHYCDIDIENKESTFTELTAKYILVLDTLNFCFWPDSEFEYHHLARGLKNALIANPKCFDADQLIKVTSETIHQWFGKDLPNTSERVRLIREVGTVLIEYFNGSIKEMILSANNKASVLVDLVTKYFWGFRDSAIYKGKQVFFYKRAQIFVGDLWGAYQGRGLGKFDDIKQLTMFADYRVPQILEELKVIEYSPELKEMIKNKVEIPVGSEMELEIRAVTVHVVEKMRDYFNKGHCELLALEIDWMLWGRGEAMLDKLPPHHRTLTIFY.

Positions 227, 229, and 296 each coordinate queuine. Aspartate 229 acts as the Nucleophile or transition state stabilizer in catalysis.

The protein belongs to the QNG1 protein family.

The catalysed reaction is queuosine 5'-phosphate + H2O = queuine + D-ribose 5-phosphate. Its function is as follows. Catalyzes the hydrolysis of queuosine 5'-phosphate, releasing the nucleobase queuine (q). Is required for salvage of queuine from exogenous queuosine (Q) that is imported and then converted to queuosine 5'-phosphate intracellularly. The sequence is that of Queuosine 5'-phosphate N-glycosylase/hydrolase from Dictyostelium discoideum (Social amoeba).